Consider the following 89-residue polypeptide: Small ribosomal subunit protein uS14 (89 aa).

Belongs to the universal ribosomal protein uS14 family. In terms of assembly, part of the 30S ribosomal subunit. Contacts proteins S3 and S10.

Functionally, binds 16S rRNA, required for the assembly of 30S particles and may also be responsible for determining the conformation of the 16S rRNA at the A site. This Flavobacterium psychrophilum (strain ATCC 49511 / DSM 21280 / CIP 103535 / JIP02/86) protein is Small ribosomal subunit protein uS14.